Here is a 546-residue protein sequence, read N- to C-terminus: CTP synthase (546 aa).

Residues 1 to 266 (MTTRYIFVTG…DDLVVKRFGL (266 aa)) are amidoligase domain. Ser-14 is a CTP binding site. Ser-14 contributes to the UTP binding site. ATP-binding positions include 15–20 (SLGKGI) and Asp-72. The Mg(2+) site is built by Asp-72 and Glu-140. CTP is bound by residues 147–149 (DIE), 187–192 (KTKPTQ), and Lys-223. UTP-binding positions include 187–192 (KTKPTQ) and Lys-223. 239 to 241 (KDV) contributes to the ATP binding site. In terms of domain architecture, Glutamine amidotransferase type-1 spans 291 to 542 (VIGMVGKYIE…VAAASAHQKR (252 aa)). Gly-352 lines the L-glutamine pocket. Catalysis depends on Cys-379, which acts as the Nucleophile; for glutamine hydrolysis. L-glutamine-binding positions include 380–383 (LGMQ), Glu-403, and Arg-470. Catalysis depends on residues His-515 and Glu-517.

The protein belongs to the CTP synthase family. Homotetramer.

It carries out the reaction UTP + L-glutamine + ATP + H2O = CTP + L-glutamate + ADP + phosphate + 2 H(+). The catalysed reaction is L-glutamine + H2O = L-glutamate + NH4(+). The enzyme catalyses UTP + NH4(+) + ATP = CTP + ADP + phosphate + 2 H(+). It participates in pyrimidine metabolism; CTP biosynthesis via de novo pathway; CTP from UDP: step 2/2. With respect to regulation, allosterically activated by GTP, when glutamine is the substrate; GTP has no effect on the reaction when ammonia is the substrate. The allosteric effector GTP functions by stabilizing the protein conformation that binds the tetrahedral intermediate(s) formed during glutamine hydrolysis. Inhibited by the product CTP, via allosteric rather than competitive inhibition. Functionally, catalyzes the ATP-dependent amination of UTP to CTP with either L-glutamine or ammonia as the source of nitrogen. Regulates intracellular CTP levels through interactions with the four ribonucleotide triphosphates. This Shewanella sp. (strain MR-7) protein is CTP synthase.